The primary structure comprises 380 residues: MTDHPIKYRLIKQEKHTGARLGEIITPHGTFPTPMFMPVGTQATVKTQSPEELKEMGSGIILSNTYHLWLRPGDELIAKAGGLHKFMNWDQAILTDSGGFQVYSLADSRNITEEGVTFKNHLNGAKMFLSPEKAISIQNNLGSDIMMSFDECPQFYQPYDYVKKSIERTSRWAERGLNAHRRPHDQGLFGIVQGAGFEDLRRQSARDLVSMDFPGYSIGGLAVGETHDEMNAVLDFTVPMLPNDKPRYLMGVGAPDSLIDAVIRGVDMFDCVLPTRIARNGTCMTSQGRLVVKNAKFAEDFTPLDPNCDCYTCKNYTRAYIRHLLKADETFGIRLTSYHNLYFLVNLMKDVRQAIMDDNLLEFRQDFMERYGYGMNNRNF.

The active-site Proton acceptor is D96. Residues 96–100, D150, Q193, and G220 each bind substrate; that span reads DSGGF. An RNA binding region spans residues 251–257; that stretch reads GVGAPDS. The active-site Nucleophile is the D270. Residues 275 to 279 are RNA binding; important for wobble base 34 recognition; it reads TRIAR. Zn(2+) contacts are provided by C308, C310, C313, and H339.

Belongs to the queuine tRNA-ribosyltransferase family. Homodimer. Within each dimer, one monomer is responsible for RNA recognition and catalysis, while the other monomer binds to the replacement base PreQ1. Zn(2+) serves as cofactor.

It catalyses the reaction 7-aminomethyl-7-carbaguanine + guanosine(34) in tRNA = 7-aminomethyl-7-carbaguanosine(34) in tRNA + guanine. Its pathway is tRNA modification; tRNA-queuosine biosynthesis. In terms of biological role, catalyzes the base-exchange of a guanine (G) residue with the queuine precursor 7-aminomethyl-7-deazaguanine (PreQ1) at position 34 (anticodon wobble position) in tRNAs with GU(N) anticodons (tRNA-Asp, -Asn, -His and -Tyr). Catalysis occurs through a double-displacement mechanism. The nucleophile active site attacks the C1' of nucleotide 34 to detach the guanine base from the RNA, forming a covalent enzyme-RNA intermediate. The proton acceptor active site deprotonates the incoming PreQ1, allowing a nucleophilic attack on the C1' of the ribose to form the product. After dissociation, two additional enzymatic reactions on the tRNA convert PreQ1 to queuine (Q), resulting in the hypermodified nucleoside queuosine (7-(((4,5-cis-dihydroxy-2-cyclopenten-1-yl)amino)methyl)-7-deazaguanosine). The chain is Queuine tRNA-ribosyltransferase from Streptococcus agalactiae serotype Ia (strain ATCC 27591 / A909 / CDC SS700).